Reading from the N-terminus, the 563-residue chain is Solute carrier family 22 member 6 (563 aa).

At 1–9 (MAFNDLLQQ) the chain is on the cytoplasmic side. Residues 10–30 (VGGVGRFQQIQVTLVVLPLLL) form a helical membrane-spanning segment. The Extracellular segment spans residues 31–135 (MASHNTLQNF…LVCSHRALRQ (105 aa)). Residues Asn-39, Asn-56, Asn-92, Asn-97, and Asn-113 are each glycosylated (N-linked (GlcNAc...) asparagine). A helical transmembrane segment spans residues 136-156 (LAQSLYMVGVLLGAMVFGYLA). Residues 157 to 164 (DRLGRRKV) are Cytoplasmic-facing. A helical transmembrane segment spans residues 165–187 (LILNYLQTAVSGTCAAFAPNFPI). The Extracellular portion of the chain corresponds to 188 to 190 (YCA). Residues 191-213 (FRLLSGMALAGISLNCMTLNVEW) form a helical membrane-spanning segment. Residues 214 to 224 (MPIHTRACVGT) are Cytoplasmic-facing. A helical membrane pass occupies residues 225-245 (LIGYVYSLGQFLLAGVAYAVP). Topologically, residues 246–248 (HWR) are extracellular. A helical membrane pass occupies residues 249-269 (HLQLLVSAPFFAFFIYSWFFI). Topologically, residues 270 to 337 (ESARWHSSSG…ELLRCPTLRH (68 aa)) are cytoplasmic. A helical membrane pass occupies residues 338-358 (LFLCLSMLWFATSFAYYGLVM). Over 359 to 368 (DLQGFGVSIY) the chain is Extracellular. The helical transmembrane segment at 369–389 (LIQVIFGAVDLPAKLVGFLVI) threads the bilayer. Residues 390–395 (NSLGRR) are Cytoplasmic-facing. Residues 396–416 (PAQMAALLLAGICILLNGVIP) form a helical membrane-spanning segment. The Extracellular segment spans residues 417–425 (QDQSIVRTS). A helical membrane pass occupies residues 426 to 446 (LAVLGKGCLAASFNCIFLYTG). Topologically, residues 447-455 (ELYPTMIRQ) are cytoplasmic. A helical membrane pass occupies residues 456–475 (TGMGMGSTMARVGSIVSPLV). Over 476–484 (SMTAELYPS) the chain is Extracellular. A helical transmembrane segment spans residues 485 to 505 (MPLFIYGAVPVAASAVTVLLP). Residues 506–563 (ETLGQPLPDTVQDLESRWAPTQKEAGIYPRKGKQTRQQQEHQKYMVPLQASAQEKNGL) lie on the Cytoplasmic side of the membrane. The segment at 525–563 (PTQKEAGIYPRKGKQTRQQQEHQKYMVPLQASAQEKNGL) is disordered.

This sequence belongs to the major facilitator (TC 2.A.1) superfamily. Organic cation transporter (TC 2.A.1.19) family. Glycosylated. Glycosylation at Asn-113 may occur at a secondary level. Glycosylation is necessary for proper targeting of the transporter to the plasma membrane. As to expression, strongly expressed in kidney. Expressed at lower level in liver, skeletal muscle, brain and placenta. In kidney, found at the basolateral membrane of the proximal tubule. In testis, primarily localized to the basal membrane of Sertoli cells and weakly expressed in Leydig cells and vascular endothelial cells.

The protein resides in the basolateral cell membrane. It is found in the basal cell membrane. The catalysed reaction is (6R)-L-erythro-5,6,7,8-tetrahydrobiopterin(out) + a dicarboxylate(in) = (6R)-L-erythro-5,6,7,8-tetrahydrobiopterin(in) + a dicarboxylate(out). The enzyme catalyses L-erythro-7,8-dihydrobiopterin(out) + a dicarboxylate(in) = L-erythro-7,8-dihydrobiopterin(in) + a dicarboxylate(out). It carries out the reaction L-sepiapterin(out) + a dicarboxylate(in) = L-sepiapterin(in) + a dicarboxylate(out). It catalyses the reaction prostaglandin F2alpha(out) + a dicarboxylate(in) = prostaglandin F2alpha(in) + a dicarboxylate(out). The catalysed reaction is prostaglandin E2(out) + a dicarboxylate(in) = prostaglandin E2(in) + a dicarboxylate(out). The enzyme catalyses 3',5'-cyclic AMP(out) + a dicarboxylate(in) = 3',5'-cyclic AMP(in) + a dicarboxylate(out). It carries out the reaction 3',5'-cyclic GMP(out) + a dicarboxylate(in) = 3',5'-cyclic GMP(in) + a dicarboxylate(out). It catalyses the reaction urate(out) + a dicarboxylate(in) = urate(in) + a dicarboxylate(out). The catalysed reaction is kynurenate(out) + glutarate(in) = kynurenate(in) + glutarate(out). The enzyme catalyses (indol-3-yl)acetate(out) + a dicarboxylate(in) = (indol-3-yl)acetate(in) + a dicarboxylate(out). It carries out the reaction indoxyl sulfate(out) + a dicarboxylate(in) = indoxyl sulfate(in) + a dicarboxylate(out). It catalyses the reaction N-benzoylglycine(out) + a dicarboxylate(in) = N-benzoylglycine(in) + a dicarboxylate(out). The catalysed reaction is 3-carboxy-4-methyl-5-propyl-2-furanpropanoate(out) + a dicarboxylate(in) = 3-carboxy-4-methyl-5-propyl-2-furanpropanoate(in) + a dicarboxylate(out). Secondary active transporter that functions as a Na(+)-independent organic anion (OA)/dicarboxylate antiporter where the uptake of one molecule of OA into the cell is coupled with an efflux of one molecule of intracellular dicarboxylate such as 2-oxoglutarate or glutarate. Mediates the uptake of OA across the basolateral side of proximal tubule epithelial cells, thereby contributing to the renal elimination of endogenous OA from the systemic circulation into the urine. Functions as a biopterin transporters involved in the uptake and the secretion of coenzymes tetrahydrobiopterin (BH4), dihydrobiopterin (BH2) and sepiapterin to urine, thereby determining baseline levels of blood biopterins. Transports prostaglandin E2 (PGE2) and prostaglandin F2-alpha (PGF2-alpha) and may contribute to their renal excretion. Also mediates the uptake of cyclic nucleotides such as cAMP and cGMP. Involved in the transport of neuroactive tryptophan metabolites kynurenate (KYNA) and xanthurenate (XA) and may contribute to their secretion from the brain. May transport glutamate. Also involved in the disposition of uremic toxins and potentially toxic xenobiotics by the renal organic anion secretory pathway, helping reduce their undesired toxicological effects on the body. Uremic toxins include the indoxyl sulfate (IS), hippurate/N-benzoylglycine (HA), indole acetate (IA), 3-carboxy-4- methyl-5-propyl-2-furanpropionate (CMPF) and urate. Xenobiotics include the mycotoxin ochratoxin (OTA). May also contribute to the transport of organic compounds in testes across the blood-testis-barrier. The polypeptide is Solute carrier family 22 member 6 (Homo sapiens (Human)).